The primary structure comprises 357 residues: Protein-L-isoaspartate O-methyltransferase domain-containing protein 1 (357 aa).

Gly-2 carries the N-myristoyl glycine lipid modification. Ser-64 is an active-site residue. AdoMet binding motif regions lie at residues 85 to 94 (LNLGSGTGYL), 160 to 164 (YDRIY), and 181 to 191 (LKVGGILVMPI). The BC-box stretch occupies residues 240-250 (VRNLQDLARIY). Residues 299-331 (PLDSEEDEKMEEDSKEEEEKEHIEAMKREEPPQ) form a disordered region. The segment covering 301–317 (DSEEDEKMEEDSKEEEE) has biased composition (acidic residues). Residues 318–331 (KEHIEAMKREEPPQ) show a composition bias toward basic and acidic residues. The tract at residues 341 to 344 (LPLP) is CUL-box.

The protein belongs to the methyltransferase superfamily. L-isoaspartyl/D-aspartyl protein methyltransferase family. In terms of assembly, component of the probable ECS(PCMTD1) E3 ubiquitin-protein ligase complex, at least composed of CUL5, ELOB, ELOC, RBX2 and PCMTD1. Interacts (via the BC-box) with ELOB and ELOC; the interaction is direct and stabilizes PCMTD1.

The protein resides in the cytoplasm. It is found in the membrane. In terms of biological role, substrate recognition component of an ECS (Elongin BC-CUL5-SOCS-box protein) E3 ubiquitin ligase complex which mediates the ubiquitination and subsequent proteasomal degradation of target proteins. Specifically binds to the methyltransferase cofactor S-adenosylmethionine (AdoMet) via the N-terminal AdoMet binding motif, but does not display methyltransferase activity. May provide an alternate maintenance pathway for modified proteins by acting as a damage-specific E3 ubiquitin ligase adaptor protein. The polypeptide is Protein-L-isoaspartate O-methyltransferase domain-containing protein 1 (Pcmtd1) (Mus musculus (Mouse)).